Here is a 312-residue protein sequence, read N- to C-terminus: Acetyl-coenzyme A carboxylase carboxyl transferase subunit alpha (312 aa).

In terms of domain architecture, CoA carboxyltransferase C-terminal spans 36 to 286 (ELEKEIEKTF…KTYFLESVKA (251 aa)).

It belongs to the AccA family. Acetyl-CoA carboxylase is a heterohexamer composed of biotin carboxyl carrier protein (AccB), biotin carboxylase (AccC) and two subunits each of ACCase subunit alpha (AccA) and ACCase subunit beta (AccD).

It is found in the cytoplasm. The catalysed reaction is N(6)-carboxybiotinyl-L-lysyl-[protein] + acetyl-CoA = N(6)-biotinyl-L-lysyl-[protein] + malonyl-CoA. Its pathway is lipid metabolism; malonyl-CoA biosynthesis; malonyl-CoA from acetyl-CoA: step 1/1. Its function is as follows. Component of the acetyl coenzyme A carboxylase (ACC) complex. First, biotin carboxylase catalyzes the carboxylation of biotin on its carrier protein (BCCP) and then the CO(2) group is transferred by the carboxyltransferase to acetyl-CoA to form malonyl-CoA. The chain is Acetyl-coenzyme A carboxylase carboxyl transferase subunit alpha from Sulfurovum sp. (strain NBC37-1).